The primary structure comprises 812 residues: Lon protease (812 aa).

The Lon N-terminal domain occupies 11-204 (IPVLPLRDVV…YLMAMMESEI (194 aa)). 356 to 363 (GPPGVGKT) contacts ATP. The Lon proteolytic domain maps to 592-773 (ENRVGQVTGL…EEEQTLSLQN (182 aa)). Active-site residues include Ser-679 and Lys-722. Residues 745–764 (KENPDNAKADQDRHPVKNNE) are compositionally biased toward basic and acidic residues. The interval 745 to 766 (KENPDNAKADQDRHPVKNNEEE) is disordered.

This sequence belongs to the peptidase S16 family. As to quaternary structure, homohexamer. Organized in a ring with a central cavity. ATP binding and hydrolysis do not affect the oligomeric state of the enzyme.

Its subcellular location is the cytoplasm. The catalysed reaction is Hydrolysis of proteins in presence of ATP.. Its activity is regulated as follows. Contains an allosteric site (distinct from its active site), whose occupancy by an unfolded polypeptide leads to enzyme activation. In terms of biological role, ATP-dependent serine protease that mediates the selective degradation of mutant and abnormal proteins as well as certain short-lived regulatory proteins. Required for cellular homeostasis and for survival from DNA damage and developmental changes induced by stress. Degrades polypeptides processively to yield small peptide fragments that are 5 to 10 amino acids long. Binds to DNA in a double-stranded, site-specific manner. Endogenous substrates include the regulatory proteins RcsA and SulA, the transcriptional activator SoxS, and UmuD. Its overproduction specifically inhibits translation through at least two different pathways, one of them being the YoeB-YefM toxin-antitoxin system. This Shigella dysenteriae serotype 1 (strain Sd197) protein is Lon protease.